The primary structure comprises 564 residues: Ribonuclease J (564 aa).

Residues H85, H87, D89, H90, H153, and D175 each coordinate Zn(2+). Substrate is bound at residue 375–379 (HVSGH). H401 provides a ligand contact to Zn(2+).

Belongs to the metallo-beta-lactamase superfamily. RNA-metabolizing metallo-beta-lactamase-like family. Bacterial RNase J subfamily. In terms of assembly, homodimer, may be a subunit of the RNA degradosome. It depends on Zn(2+) as a cofactor.

The protein resides in the cytoplasm. Its function is as follows. An RNase that has 5'-3' exonuclease and possibly endonuclease activity. Plays a role in 16S and 23S rRNA processing. Might have a role in mRNA maturation and/or decay. The chain is Ribonuclease J from Sinorhizobium meliloti (strain Sm2011 / Rm2011 / 2011).